A 921-amino-acid polypeptide reads, in one-letter code: DNA mismatch repair protein MutS 1 (921 aa).

Position 619–626 (Gly-619–Ser-626) interacts with ATP. The tract at residues Phe-837 to Thr-887 is disordered. Positions Gly-840–Ala-853 are enriched in low complexity.

This sequence belongs to the DNA mismatch repair MutS family.

Its function is as follows. This protein is involved in the repair of mismatches in DNA. It is possible that it carries out the mismatch recognition step. This protein has a weak ATPase activity. In Haloarcula marismortui (strain ATCC 43049 / DSM 3752 / JCM 8966 / VKM B-1809) (Halobacterium marismortui), this protein is DNA mismatch repair protein MutS 1.